A 139-amino-acid chain; its full sequence is MKRGVLLNAPLSALVARMGHTDEITVCDAGLPIPAGPERIDLALMAGTPSLETVLTALLTDLVVEKVIMASEIKQISPAAHQALVDQLEAHAAAQGKPITIEYCLHEAFKARSHQSKAIVRSGEVTPYANLILCAGVAF.

H20 acts as the Proton donor in catalysis. Residues D28, H106, and 128-130 (YAN) contribute to the substrate site.

Belongs to the RbsD / FucU family. RbsD subfamily. Homodecamer.

It localises to the cytoplasm. It catalyses the reaction beta-D-ribopyranose = beta-D-ribofuranose. It functions in the pathway carbohydrate metabolism; D-ribose degradation; D-ribose 5-phosphate from beta-D-ribopyranose: step 1/2. Catalyzes the interconversion of beta-pyran and beta-furan forms of D-ribose. This Aeromonas hydrophila subsp. hydrophila (strain ATCC 7966 / DSM 30187 / BCRC 13018 / CCUG 14551 / JCM 1027 / KCTC 2358 / NCIMB 9240 / NCTC 8049) protein is D-ribose pyranase.